A 318-amino-acid chain; its full sequence is Probable serine/threonine-protein kinase MRK1 homolog (318 aa).

Residues 40–313 (YRYVEMIGRG…ASELLRKQFF (274 aa)) enclose the Protein kinase domain. Residues 46 to 54 (IGRGSFGVV) and lysine 68 contribute to the ATP site. Aspartate 159 serves as the catalytic Proton acceptor.

Belongs to the protein kinase superfamily. CMGC Ser/Thr protein kinase family. GSK-3 subfamily.

The protein resides in the cytoplasm. The protein localises to the nucleus. It carries out the reaction L-seryl-[protein] + ATP = O-phospho-L-seryl-[protein] + ADP + H(+). It catalyses the reaction L-threonyl-[protein] + ATP = O-phospho-L-threonyl-[protein] + ADP + H(+). Functionally, may play a role in the initiation and completion of mitosis. The polypeptide is Probable serine/threonine-protein kinase MRK1 homolog (MRK1) (Encephalitozoon cuniculi (strain GB-M1) (Microsporidian parasite)).